Reading from the N-terminus, the 814-residue chain is Immunoglobulin superfamily DCC subclass member 3 (814 aa).

The signal sequence occupies residues 1-35; it reads MAVQRAASPRRPPAPLWPRLLLPLLLLLLPAPSEG. 4 consecutive Ig-like C2-type domains span residues 36–139, 140–220, 238–321, and 329–416; these read LGHS…ATMS, DFHV…IRIS, PAIL…RTAQ, and PAEF…ARLT. 2 disulfides stabilise this stretch: Cys-63–Cys-117 and Cys-160–Cys-209. Asn-93 is a glycosylation site (N-linked (GlcNAc...) asparagine). Asn-246 carries an N-linked (GlcNAc...) asparagine glycan. 2 disulfides stabilise this stretch: Cys-259–Cys-307 and Cys-351–Cys-400. Asn-381 and Asn-382 each carry an N-linked (GlcNAc...) asparagine glycan. Fibronectin type-III domains lie at 426–520 and 523–618; these read PPRN…TLGE and APPP…ASER. Residues Asn-580, Asn-604, and Asn-634 are each glycosylated (N-linked (GlcNAc...) asparagine). A helical membrane pass occupies residues 641–661; sequence IVIGIHIGVTCIIFCVLFLLF. Disordered regions lie at residues 722–743 and 762–814; these read PPAS…APAP and GKTT…HSEQ. The segment covering 770-781 has biased composition (low complexity); the sequence is TEATAPCAGLAA.

This sequence belongs to the immunoglobulin superfamily. DCC family.

The protein localises to the membrane. The protein is Immunoglobulin superfamily DCC subclass member 3 (IGDCC3) of Homo sapiens (Human).